A 246-amino-acid polypeptide reads, in one-letter code: MAHILMKQLLEAGVHFGHQTKRWCPKMKEYIFSERNGIHIIDLQKTLVKLEEAYEFAKEQAKEGKTFLFVGTKKQAQQTIEEEAKRCGAFYVNQRWLGGMLTNFTTIKSRIDYMVKLEELKNNGYFEKLPKKQANRLNRELEKLVKVFDGLRGIEKLPDVLYIVDPKREEIAVKEANKLGIPIIAIVDTNCDPELITYPIPGNDDAIRSIKLITSKIADAILEGKDLREKEADLQLKDEDLQSEIS.

The protein belongs to the universal ribosomal protein uS2 family.

This is Small ribosomal subunit protein uS2 from Dictyoglomus thermophilum (strain ATCC 35947 / DSM 3960 / H-6-12).